The sequence spans 435 residues: MGCSLNNNSQDDYVSFVIKEEEASCEEGNQSDCSINPLTEPIQGTDTPTPNMLYSLVRDFLKTNGNKYDENANTSAHFSRNRDSDKHERTHTGKKLHSCSQCGKCFSSSSDLLAHRRQSHTREKPFSCSECGKCFSFRSRLIDHQRTHTGEKPFCCFQCGKSFSVRSRFLDHRRTHTGEKPFSCLECGKCFLFRSRLLEHQRTHTGEKPFSCLKCGKCFSVRSRLKDHQRTHTGEKPFSCLECGKSFSFRPCLIDHQRTHTGEKPFSCFQCGKCFSFQSRLINHQRTHTGEKPFSCSECGKSFSNQSCLRVHQRTHTGEKPYSCSECGKSFVTSSQLAVHRRRTHTGEKPFSCSECGKCFSNQSCLRVHQRTHTGENLFSCSECGKSFVTSSKLASHQRQTHTGEKPVSCSECGKCFTRKRSLKVHFKIHTGGKP.

Residues Asn71 to Thr92 are disordered. The segment covering Arg80–His91 has biased composition (basic and acidic residues). 12 C2H2-type zinc fingers span residues His97–His120, Phe126–His148, Phe154–His176, Phe182–His204, Phe210–His232, Phe238–His260, Phe266–His288, Phe294–His316, Tyr322–His345, Phe351–His373, Phe379–His402, and Val408–His430.

It belongs to the krueppel C2H2-type zinc-finger protein family.

It is found in the nucleus. Its function is as follows. May be involved in transcriptional regulation. The sequence is that of Oocyte zinc finger protein XlCOF22 from Xenopus laevis (African clawed frog).